Reading from the N-terminus, the 359-residue chain is Acyl-CoA desaturase (359 aa).

Over 1–72 (MPAHLLQEEI…EGPKPKLEYV (72 aa)) the chain is Cytoplasmic. A helical transmembrane segment spans residues 73-93 (WRNIILMGLLHLGALYGITLI). N75 serves as a coordination point for substrate. Over 94 to 97 (PTCK) the chain is Lumenal. The helical transmembrane segment at 98–118 (IYTFLWVLFYYVISALGITAG) threads the bilayer. Topologically, residues 119-217 (VHRLWSHRTY…EKLVMFQRRY (99 aa)) are cytoplasmic. 2 residues coordinate Fe cation: H120 and H125. The short motif at 120-125 (HRLWSH) is the Histidine box-1 element. Residues N148, R155, and D156 each contribute to the substrate site. Residues H157, H160, and H161 each contribute to the Fe cation site. Residues 157–161 (HRAHH) carry the Histidine box-2 motif. Substrate is bound by residues R188 and K189. Phosphoserine is present on S203. A helical transmembrane segment spans residues 218–237 (YKPGVLLLCFILPTLVPWYL). Residues 238-241 (WGES) lie on the Lumenal side of the membrane. A helical membrane pass occupies residues 242-263 (FQNSLFFATFLRYAVVLNATWL). W262 serves as a coordination point for substrate. At 264–359 (VNSAAHMYGY…RTGEESYKSG (96 aa)) the chain is on the cytoplasmic side. Residues H269, H298, H301, and H302 each coordinate Fe cation. The Histidine box-3 motif lies at 298–302 (HNYHH).

The protein belongs to the fatty acid desaturase type 1 family. Fe(2+) serves as cofactor.

The protein localises to the endoplasmic reticulum membrane. It catalyses the reaction octadecanoyl-CoA + 2 Fe(II)-[cytochrome b5] + O2 + 2 H(+) = (9Z)-octadecenoyl-CoA + 2 Fe(III)-[cytochrome b5] + 2 H2O. In terms of biological role, stearoyl-CoA desaturase that utilizes O(2) and electrons from reduced cytochrome b5 to introduce the first double bond into saturated fatty acyl-CoA substrates. Catalyzes the insertion of a cis double bond at the delta-9 position into fatty acyl-CoA substrates including palmitoyl-CoA and stearoyl-CoA. Gives rise to a mixture of 16:1 and 18:1 unsaturated fatty acids. Plays an important role in lipid biosynthesis. Plays an important role in regulating the expression of genes that are involved in lipogenesis and in regulating mitochondrial fatty acid oxidation. Plays an important role in body energy homeostasis. Contributes to the biosynthesis of membrane phospholipids, cholesterol esters and triglycerides. This is Acyl-CoA desaturase (SCD) from Ovis aries (Sheep).